The primary structure comprises 60 residues: MADESKFDQFKGNVKETVGNVTDNKELEKEGQQDKVIGKAKEVVENAKNKITDAIDKLKK.

Belongs to the UPF0337 (CsbD) family.

The chain is UPF0337 protein SACOL1680 from Staphylococcus aureus (strain COL).